A 395-amino-acid chain; its full sequence is Flap endonuclease 1 (395 aa).

Positions 1–104 (MGIKQLYQVI…GELAKRTARK (104 aa)) are N-domain. Aspartate 34 lines the Mg(2+) pocket. Residues arginine 47 and arginine 70 each contribute to the DNA site. Aspartate 86 serves as a coordination point for Mg(2+). The interval 96–121 (ELAKRTARKTEATEAHEEAKETGTAE) is disordered. The I-domain stretch occupies residues 122–253 (DVEKFSRRTV…NTALKLIRDH (132 aa)). Mg(2+)-binding residues include glutamate 158, glutamate 160, aspartate 179, and aspartate 181. Glutamate 158 provides a ligand contact to DNA. DNA-binding residues include glycine 231 and aspartate 233. Aspartate 233 is a binding site for Mg(2+). Residues 341-349 (QQSRLEGFF) are interaction with PCNA. The tract at residues 348–395 (FFKPVARSDEEKATLKRKHDEKLQEQKKRKKEEAKAKKEAKARPRGAG) is disordered. A compositionally biased stretch (basic and acidic residues) spans 353–389 (ARSDEEKATLKRKHDEKLQEQKKRKKEEAKAKKEAKA).

It belongs to the XPG/RAD2 endonuclease family. FEN1 subfamily. As to quaternary structure, interacts with PCNA. Three molecules of fen1 bind to one PCNA trimer with each molecule binding to one PCNA monomer. PCNA stimulates the nuclease activity without altering cleavage specificity. Mg(2+) is required as a cofactor. In terms of processing, phosphorylated. Phosphorylation upon DNA damage induces relocalization to the nuclear plasma.

It is found in the nucleus. Its subcellular location is the nucleolus. The protein localises to the nucleoplasm. The protein resides in the mitochondrion. Its function is as follows. Structure-specific nuclease with 5'-flap endonuclease and 5'-3' exonuclease activities involved in DNA replication and repair. During DNA replication, cleaves the 5'-overhanging flap structure that is generated by displacement synthesis when DNA polymerase encounters the 5'-end of a downstream Okazaki fragment. It enters the flap from the 5'-end and then tracks to cleave the flap base, leaving a nick for ligation. Also involved in the long patch base excision repair (LP-BER) pathway, by cleaving within the apurinic/apyrimidinic (AP) site-terminated flap. Acts as a genome stabilization factor that prevents flaps from equilibrating into structures that lead to duplications and deletions. Also possesses 5'-3' exonuclease activity on nicked or gapped double-stranded DNA, and exhibits RNase H activity. Also involved in replication and repair of rDNA and in repairing mitochondrial DNA. This chain is Flap endonuclease 1 (fen1), found in Aspergillus terreus (strain NIH 2624 / FGSC A1156).